The following is a 200-amino-acid chain: ATP synthase subunit s, mitochondrial (200 aa).

The transit peptide at 1 to 25 directs the protein to the mitochondrion; it reads MMMFGKISRQLCSLKKIPWSCDSRY. The N-terminal domain stretch occupies residues 1–61; it reads MMMFGKISRQ…SEWLLRCGAK (61 aa). Residue G59 coordinates Mg(2+). 4 LRR repeats span residues 62–87, 88–116, 117–141, and 142–173; these read VRYCGHQKWLHDYNTLPGSSIDRYKI, QAIDATDSCIMDIGLDHMVGLEHVEKITL, CKCHYIEDNCLQRLSQLENLRKSLL, and ELEIIACGNVTDNGVIALRHFRNLKYLFLSDL. T93 provides a ligand contact to Mg(2+).

It belongs to the ATP synthase subunit s family. As to quaternary structure, homotetramer. Associates with ATP synthase.

The protein localises to the mitochondrion. It is found in the mitochondrion inner membrane. Its function is as follows. Involved in regulation of mitochondrial membrane ATP synthase. Necessary for H(+) conduction of ATP synthase. Facilitates energy-driven catalysis of ATP synthesis by blocking a proton leak through an alternative proton exit pathway. This is ATP synthase subunit s, mitochondrial (Dmac2l) from Mus musculus (Mouse).